Here is a 158-residue protein sequence, read N- to C-terminus: Fibroblast growth factor 2 (158 aa).

A propeptide spanning residues 1–12 (MAAGAAGSITTL) is cleaved from the precursor. Position 39 (Asn39) interacts with heparin. Positions 131–147 (KRTGQYKPGPKTGPGQK) are heparin-binding.

This sequence belongs to the heparin-binding growth factors family.

The protein resides in the secreted. It is found in the nucleus. Its function is as follows. Acts as a ligand for FGFR1, FGFR2, FGFR3 and FGFR4. Also acts as an integrin ligand which is required for FGF2 signaling. Plays an important role in the regulation of cell survival, cell division, cell differentiation and cell migration. Functions as a potent mitogen in vitro. Can induce angiogenesis. This is Fibroblast growth factor 2 (FGF2) from Gallus gallus (Chicken).